Consider the following 372-residue polypeptide: DNA replication and repair protein RecF (372 aa).

An ATP-binding site is contributed by 30–37 (GENGQGKT).

The protein belongs to the RecF family.

Its subcellular location is the cytoplasm. Its function is as follows. The RecF protein is involved in DNA metabolism; it is required for DNA replication and normal SOS inducibility. RecF binds preferentially to single-stranded, linear DNA. It also seems to bind ATP. The sequence is that of DNA replication and repair protein RecF from Anaeromyxobacter sp. (strain K).